The primary structure comprises 197 residues: Phospholipid hydroperoxide glutathione peroxidase (197 aa).

Ser-40 bears the Phosphoserine mark. Sec-73 is a catalytic residue. Sec-73 is a non-standard amino acid (selenocysteine).

This sequence belongs to the glutathione peroxidase family. In terms of assembly, monomer. Has a tendency to form higher mass oligomers. Interacts with FUNDC1; this interaction promotes GPX4 recruitment into mitochondria through TOM/TIM complex where it is degraded by mitophagy.

It localises to the mitochondrion. Its subcellular location is the cytoplasm. The catalysed reaction is a hydroperoxy polyunsaturated fatty acid + 2 glutathione = a hydroxy polyunsaturated fatty acid + glutathione disulfide + H2O. It carries out the reaction 2 glutathione + H2O2 = glutathione disulfide + 2 H2O. It catalyses the reaction tert-butyl hydroperoxide + 2 glutathione = tert-butanol + glutathione disulfide + H2O. The enzyme catalyses cumene hydroperoxide + 2 glutathione = 2-phenylpropan-2-ol + glutathione disulfide + H2O. The catalysed reaction is (9S)-hydroperoxy-(10E,12Z)-octadecadienoate + 2 glutathione = (9S)-hydroxy-(10E,12Z)-octadecadienoate + glutathione disulfide + H2O. It carries out the reaction (13S)-hydroperoxy-(9Z,11E)-octadecadienoate + 2 glutathione = (13S)-hydroxy-(9Z,11E)-octadecadienoate + glutathione disulfide + H2O. It catalyses the reaction (5S)-hydroperoxy-(6E,8Z,11Z,14Z)-eicosatetraenoate + 2 glutathione = (5S)-hydroxy-(6E,8Z,11Z,14Z)-eicosatetraenoate + glutathione disulfide + H2O. The enzyme catalyses (12R)-hydroperoxy-(5Z,8Z,10E,14Z)-eicosatetraenoate + 2 glutathione = (12R)-hydroxy-(5Z,8Z,10E,14Z)-eicosatetraenoate + glutathione disulfide + H2O. The catalysed reaction is (12S)-hydroperoxy-(5Z,8Z,10E,14Z)-eicosatetraenoate + 2 glutathione = (12S)-hydroxy-(5Z,8Z,10E,14Z)-eicosatetraenoate + glutathione disulfide + H2O. It carries out the reaction (15S)-hydroperoxy-(5Z,8Z,11Z,13E)-eicosatetraenoate + 2 glutathione = (15S)-hydroxy-(5Z,8Z,11Z,13E)-eicosatetraenoate + glutathione disulfide + H2O. It catalyses the reaction (5S)-hydroperoxy-(6E,8Z,11Z,14Z,17Z)-eicosapentaenoate + 2 glutathione = (5S)-hydroxy-(6E,8Z,11Z,14Z,17Z)-eicosapentaenoate + glutathione disulfide + H2O. The enzyme catalyses (12S)-hydroperoxy-(5Z,8Z,10E,14Z,17Z)-eicosapentaenoate + 2 glutathione = (12S)-hydroxy-(5Z,8Z,10E,14Z,17Z)-eicosapentaenoate + glutathione disulfide + H2O. The catalysed reaction is (15S)-hydroperoxy-(5Z,8Z,11Z,13E,17Z)-eicosapentaenoate + 2 glutathione = (15S)-hydroxy-(5Z,8Z,11Z,13E,17Z)-eicosapentaenoate + glutathione disulfide + H2O. It carries out the reaction (15S)-hydroperoxy-(11Z,13E)-eicosadienoate + 2 glutathione = (15S)-hydroxy-(11Z,13E)-eicosadienoate + glutathione disulfide + H2O. It catalyses the reaction (17S)-hydroperoxy-(4Z,7Z,10Z,13Z,15E,19Z)-docosahexaenoate + 2 glutathione = (17S)-hydroxy-(4Z,7Z,10Z,13Z,15E,19Z)-docosahexaenoate + glutathione disulfide + H2O. The enzyme catalyses a hydroperoxy-1,2-diacyl-glycero-3-phosphocholine + 2 glutathione = a hydroxy-1,2-diacyl-glycero-3-phosphocholine + glutathione disulfide + H2O. Functionally, essential antioxidant peroxidase that directly reduces phospholipid hydroperoxide even if they are incorporated in membranes and lipoproteins. Can also reduce fatty acid hydroperoxide, cholesterol hydroperoxide and thymine hydroperoxide. Plays a key role in protecting cells from oxidative damage by preventing membrane lipid peroxidation. Required to prevent cells from ferroptosis, a non-apoptotic cell death resulting from an iron-dependent accumulation of lipid reactive oxygen species. The presence of selenocysteine (Sec) versus Cys at the active site is essential for life: it provides resistance to overoxidation and prevents cells against ferroptosis. The presence of Sec at the active site is also essential for the survival of a specific type of parvalbumin-positive interneurons, thereby preventing against fatal epileptic seizures. May be required to protect cells from the toxicity of ingested lipid hydroperoxides. Required for normal sperm development and male fertility. Essential for maturation and survival of photoreceptor cells. Plays a role in a primary T-cell response to viral and parasitic infection by protecting T-cells from ferroptosis and by supporting T-cell expansion. Plays a role of glutathione peroxidase in platelets in the arachidonic acid metabolism. Reduces hydroperoxy ester lipids formed by a 15-lipoxygenase that may play a role as down-regulator of the cellular 15-lipoxygenase pathway. Can also reduce small soluble hydroperoxides such as H2O2, cumene hydroperoxide and tert-butyl hydroperoxide. In Sus scrofa (Pig), this protein is Phospholipid hydroperoxide glutathione peroxidase.